The primary structure comprises 157 residues: Small ribosomal subunit protein uS7cz/uS7cy (157 aa).

The protein belongs to the universal ribosomal protein uS7 family. As to quaternary structure, part of the 30S ribosomal subunit.

Its subcellular location is the plastid. It is found in the chloroplast. Its function is as follows. One of the primary rRNA binding proteins, it binds directly to 16S rRNA where it nucleates assembly of the head domain of the 30S subunit. This Gnetum parvifolium (Small-leaved jointfir) protein is Small ribosomal subunit protein uS7cz/uS7cy (rps7-A).